Consider the following 750-residue polypeptide: Signal transducer and activator of transcription 1-alpha/beta (750 aa).

Position 2 is an N-acetylserine (Ser-2). An N6-methyllysine mark is found at Lys-114, Lys-175, Lys-296, Lys-366, Lys-525, and Lys-637. Positions 136 to 317 form a coiled coil; sequence LDKQKELDSK…LFQQLIQSSF (182 aa). Positions 573–670 constitute an SH2 domain; it reads WNDGCIMGFI…ENPLKYLYPN (98 aa). Glu-657 bears the ADP-ribosyl glutamic acid; by PARP14 mark. At Lys-665 the chain carries N6-methyllysine. The residue at position 701 (Tyr-701) is a Phosphotyrosine; by JAK1, JAK2 or TYK2. A Glycyl lysine isopeptide (Lys-Gly) (interchain with G-Cter in SUMO1); alternate cross-link involves residue Lys-703. Lys-703 participates in a covalent cross-link: Glycyl lysine isopeptide (Lys-Gly) (interchain with G-Cter in SUMO2); alternate. The residue at position 705 (Glu-705) is an ADP-ribosyl glutamic acid; by PARP14. Position 708 is a phosphoserine; by IKKE (Ser-708). Phosphoserine; by CAMK2 and MAPK14 is present on Ser-727. Ser-745 is modified (phosphoserine; by IKKE). A Phosphothreonine; by IKKB modification is found at Thr-749.

This sequence belongs to the transcription factor STAT family. In terms of assembly, isoform alpha homodimerizes upon IFN-gamma induced phosphorylation. Heterodimer with STAT2 upon IFN-alpha/beta induced phosphorylation. The heterodimer STAT1:STAT2 forms the interferon-stimulated gene factor 3 complex (ISGF3) with IRF9. Interacts (phosphorylated at Ser-727) with PIAS1; the interaction results in release of STAT1 from its target gene. Interacts with IFNAR1; the interaction requires the phosphorylation of IFNAR1 at 'Tyr-466'. Interacts with IFNAR2. Found in a complex with NMI and CREBBP/CBP. Interacts with NMI which is required for CREBBP/CBP recruitment to the complex. Interacts with PTK2/FAK1. Interacts with SRC. Interacts with ERBB4 (phosphorylated). Interacts with PARP9 and DTX3L independently of IFN-beta or IFN-gamma-mediated STAT1 'Tyr-701' phosphorylation. Interacts with histone acetyltransferase EP300/p300 in response to INF-gamma stimulation. Independently of its phosphorylation status, interacts with OTOP1. Interacts with IFNGR1. Interacts with STAT4. (Microbial infection) Interacts with Sendai virus C', C, Y1 and Y2 proteins, preventing activation of ISRE and GAS promoter. As to quaternary structure, (Microbial infection) Interacts with Nipah virus P, V and W proteins preventing activation of ISRE and GAS promoter. In terms of assembly, (Microbial infection) Interacts with Rabies virus phosphoprotein preventing activation of ISRE and GAS promoter. (Microbial infection) Interacts with HCV core protein; the interaction results in STAT1 degradation. As to quaternary structure, (Microbial infection) Interacts with ebolavirus protein VP24. In terms of assembly, (Microbial infection) Interacts with Epstein-Barr virus (EBV) tegument protein BGLF2; this interaction leads to STAT1 dephosphorylation and inhibition. (Microbial infection) Interacts (via N-terminus) with measles V protein; this interaction inhibits STAT1 phosphorylation by Jak1 and thereby the type I interferon signaling pathway. Post-translationally, deubiquitinated by USP13; leading to STAT1 stabilization and positive regulation of type I and type II IFN signalings. Phosphorylated on tyrosine and serine residues in response to a variety of cytokines/growth hormones including IFN-alpha, IFN-gamma, PDGF and EGF. Activated KIT promotes phosphorylation on tyrosine residues and subsequent translocation to the nucleus. Upon EGF stimulation, phosphorylation on Tyr-701 (lacking in beta form) by JAK1, JAK2 or TYK2 promotes dimerization and subsequent translocation to the nucleus. Growth hormone (GH) activates STAT1 signaling only via JAK2. Tyrosine phosphorylated in response to constitutively activated FGFR1, FGFR2, FGFR3 and FGFR4. Phosphorylation on Ser-727 by several kinases including MAPK14, ERK1/2, CAMK2/CAMKII and CK2 in response to IFN-gamma stimulation, is required for maximal transcriptional activity. Phosphorylated on Ser-727 by CAMK2/CAMKII in response to IFN-gamma stimulation and calcium mobilization, promoting activity. Phosphorylated by CAMK2/CAMKII in response to IFN-beta stimulation and calcium mobilization in epithelial cells, promoting activity. Phosphorylation on Ser-727 promotes sumoylation though increasing interaction with PIAS. Phosphorylation on Ser-727 by PRKCD induces apoptosis in response to DNA-damaging agents. Phosphorylated on tyrosine residues when PTK2/FAK1 is activated; most likely this is catalyzed by a SRC family kinase. Dephosphorylation on tyrosine residues by PTPN2 negatively regulates interferon-mediated signaling. Upon viral infection or IFN induction, phosphorylation on Ser-708 occurs much later than phosphorylation on Tyr-701 and is required for the binding of ISGF3 on the ISREs of a subset of IFN-stimulated genes IKBKE-dependent. Phosphorylation at Tyr-701 and Ser-708 are mutually exclusive, phosphorylation at Ser-708 requires previous dephosphorylation of Tyr-701. Phosphorylation at Thr-749 by IKBKB/IKKB promotes transcriptional activation of ARID5A and IL12B by STAT1. Phosphorylation at Thr-749 restricts interferon signaling and anti-inflammatory responses and promotes innate inflammatory responses. In terms of processing, sumoylated with SUMO1, SUMO2 and SUMO3. Sumoylation is enhanced by IFN-gamma-induced phosphorylation on Ser-727, and by interaction with PIAS proteins. Enhances the transactivation activity. Post-translationally, ISGylated. Mono-ADP-ribosylated at Glu-657 and Glu-705 by PARP14; ADP-ribosylation prevents phosphorylation at Tyr-701. However, the role of ADP-ribosylation in the prevention of phosphorylation has been called into question and the lack of phosphorylation may be due to sumoylation of Lys-703. In terms of processing, monomethylated at Lys-525 by SETD2; monomethylation is necessary for phosphorylation at Tyr-701, translocation into the nucleus and activation of the antiviral defense. Post-translationally, (Microbial infection) Ubiquitinated by Herpes simplex virus 2 E3 ubiquitin ligase ICP22.

It is found in the cytoplasm. Its subcellular location is the nucleus. In terms of biological role, signal transducer and transcription activator that mediates cellular responses to interferons (IFNs), cytokine KITLG/SCF and other cytokines and other growth factors. Following type I IFN (IFN-alpha and IFN-beta) binding to cell surface receptors, signaling via protein kinases leads to activation of Jak kinases (TYK2 and JAK1) and to tyrosine phosphorylation of STAT1 and STAT2. The phosphorylated STATs dimerize and associate with ISGF3G/IRF-9 to form a complex termed ISGF3 transcription factor, that enters the nucleus. ISGF3 binds to the IFN stimulated response element (ISRE) to activate the transcription of IFN-stimulated genes (ISG), which drive the cell in an antiviral state. In response to type II IFN (IFN-gamma), STAT1 is tyrosine- and serine-phosphorylated. It then forms a homodimer termed IFN-gamma-activated factor (GAF), migrates into the nucleus and binds to the IFN gamma activated sequence (GAS) to drive the expression of the target genes, inducing a cellular antiviral state. Becomes activated in response to KITLG/SCF and KIT signaling. May mediate cellular responses to activated FGFR1, FGFR2, FGFR3 and FGFR4. Following bacterial lipopolysaccharide (LPS)-induced TLR4 endocytosis, phosphorylated at Thr-749 by IKBKB which promotes binding of STAT1 to the 5'-TTTGAGGC-3' sequence in the ARID5A promoter, resulting in transcriptional activation of ARID5A and subsequent ARID5A-mediated stabilization of IL6. Phosphorylation at Thr-749 also promotes binding of STAT1 to the 5'-TTTGAGTC-3' sequence in the IL12B promoter and activation of IL12B transcription. Involved in food tolerance in small intestine: associates with the Gasdermin-D, p13 cleavage product (13 kDa GSDMD) and promotes transcription of CIITA, inducing type 1 regulatory T (Tr1) cells in upper small intestine. The chain is Signal transducer and activator of transcription 1-alpha/beta (STAT1) from Homo sapiens (Human).